Here is a 330-residue protein sequence, read N- to C-terminus: Probable NAD(P)H-dependent D-xylose reductase xyl1 (330 aa).

Tyr-50 (proton donor) is an active-site residue. A substrate-binding site is contributed by His-112. NAD(+) contacts are provided by residues 166–167 (SN), 215–224 (SSFGPLSFLE), and 271–281 (KSNNPTRLAQN).

Belongs to the aldo/keto reductase family.

It carries out the reaction xylitol + NAD(+) = D-xylose + NADH + H(+). The catalysed reaction is xylitol + NADP(+) = D-xylose + NADPH + H(+). Its pathway is carbohydrate metabolism; D-xylose degradation. Its function is as follows. Catalyzes the initial reaction in the xylose utilization pathway by reducing D-xylose into xylitol. Xylose is a major component of hemicelluloses such as xylan. Most fungi utilize D-xylose via three enzymatic reactions, xylose reductase (XR), xylitol dehydrogenase (XDH), and xylulokinase, to form xylulose 5-phosphate, which enters pentose phosphate pathway. The sequence is that of Probable NAD(P)H-dependent D-xylose reductase xyl1 (xyl1) from Aspergillus clavatus (strain ATCC 1007 / CBS 513.65 / DSM 816 / NCTC 3887 / NRRL 1 / QM 1276 / 107).